Consider the following 256-residue polypeptide: Diacetyl reductase [(S)-acetoin forming] (256 aa).

NAD(+) contacts are provided by residues 6–33 and Asp59; that span reads LVTGAGQGIGKAIALRLVKDGFAVAIAD. Ser139 contributes to the substrate binding site. Catalysis depends on Tyr152, which acts as the Proton acceptor. Lys156 contributes to the NAD(+) binding site.

This sequence belongs to the short-chain dehydrogenases/reductases (SDR) family. As to quaternary structure, homotetramer.

It carries out the reaction (S)-acetoin + NAD(+) = diacetyl + NADH + H(+). Catalyzes the reversible reduction of (S)-acetoin to 2,3-butanediol in the presence of NADH. The sequence is that of Diacetyl reductase [(S)-acetoin forming] (budC) from Klebsiella pneumoniae.